The following is a 410-amino-acid chain: Arginine deiminase (410 aa).

Residue cysteine 400 is the Amidino-cysteine intermediate of the active site.

This sequence belongs to the arginine deiminase family.

It localises to the cytoplasm. It catalyses the reaction L-arginine + H2O = L-citrulline + NH4(+). It functions in the pathway amino-acid degradation; L-arginine degradation via ADI pathway; carbamoyl phosphate from L-arginine: step 1/2. The chain is Arginine deiminase from Bacillus cereus (strain ATCC 10987 / NRS 248).